A 1415-amino-acid polypeptide reads, in one-letter code: DNA-directed RNA polymerase subunit beta' (1415 aa).

Residues Cys-72, Cys-74, Cys-87, and Cys-90 each contribute to the Zn(2+) site. The Mg(2+) site is built by Asp-463, Asp-465, and Asp-467. Positions 812, 886, 893, and 896 each coordinate Zn(2+).

Belongs to the RNA polymerase beta' chain family. As to quaternary structure, the RNAP catalytic core consists of 2 alpha, 1 beta, 1 beta' and 1 omega subunit. When a sigma factor is associated with the core the holoenzyme is formed, which can initiate transcription. Mg(2+) is required as a cofactor. It depends on Zn(2+) as a cofactor.

It carries out the reaction RNA(n) + a ribonucleoside 5'-triphosphate = RNA(n+1) + diphosphate. DNA-dependent RNA polymerase catalyzes the transcription of DNA into RNA using the four ribonucleoside triphosphates as substrates. In Dinoroseobacter shibae (strain DSM 16493 / NCIMB 14021 / DFL 12), this protein is DNA-directed RNA polymerase subunit beta'.